Here is a 1091-residue protein sequence, read N- to C-terminus: Isoleucine--tRNA ligase (1091 aa).

Positions 48 to 58 match the 'HIGH' region motif; the sequence is PFATGLPHFGH. The short motif at 625-629 is the 'KMSKS' region element; that stretch reads KMSKA. K628 lines the ATP pocket.

It belongs to the class-I aminoacyl-tRNA synthetase family. IleS type 2 subfamily. As to quaternary structure, monomer. The cofactor is Zn(2+).

Its subcellular location is the cytoplasm. The catalysed reaction is tRNA(Ile) + L-isoleucine + ATP = L-isoleucyl-tRNA(Ile) + AMP + diphosphate. Functionally, catalyzes the attachment of isoleucine to tRNA(Ile). As IleRS can inadvertently accommodate and process structurally similar amino acids such as valine, to avoid such errors it has two additional distinct tRNA(Ile)-dependent editing activities. One activity is designated as 'pretransfer' editing and involves the hydrolysis of activated Val-AMP. The other activity is designated 'posttransfer' editing and involves deacylation of mischarged Val-tRNA(Ile). This Treponema pallidum (strain Nichols) protein is Isoleucine--tRNA ligase.